A 1480-amino-acid polypeptide reads, in one-letter code: C-type mannose receptor 2 (1480 aa).

The first 30 residues, 1 to 30 (MGPIRPALAPWPRHLLRCVLLLGGLRLGHP), serve as a signal peptide directing secretion. Topologically, residues 31–1413 (ADSAAALLEP…SAALPENPVA (1383 aa)) are extracellular. The Ricin B-type lectin domain maps to 40–166 (PDVFLIFSQG…WNIYGSEEDL (127 aa)). Disulfide bonds link cysteine 53–cysteine 67 and cysteine 92–cysteine 111. N-linked (GlcNAc...) asparagine glycosylation is found at asparagine 101 and asparagine 139. The 49-residue stretch at 181 to 229 (SHGKPCTIPFKYDNQWFHGCTSTGREDGHLWCATTQDYGKDERWGFCPI) folds into the Fibronectin type-II domain. 4 cysteine pairs are disulfide-bonded: cysteine 186–cysteine 212, cysteine 200–cysteine 227, cysteine 265–cysteine 358, and cysteine 334–cysteine 350. In terms of domain architecture, C-type lectin 1 spans 243–359 (LTDSCYQFNF…CSIALPYVCK (117 aa)). N-linked (GlcNAc...) asparagine glycosylation occurs at asparagine 363. 7 consecutive C-type lectin domains span residues 388 to 504 (FQGH…SICK), 527 to 643 (HSPS…RYIC), 677 to 808 (KLRH…WICK), 831 to 950 (FQEA…YICK), 978 to 1106 (FLNK…GFIC), 1131 to 1242 (YLNR…GAVC), and 1271 to 1391 (FREH…GVVC). Disulfide bonds link cysteine 409–cysteine 503, cysteine 480–cysteine 495, cysteine 617–cysteine 634, cysteine 703–cysteine 807, cysteine 784–cysteine 799, cysteine 852–cysteine 949, and cysteine 926–cysteine 941. Asparagine 1028 carries an N-linked (GlcNAc...) asparagine glycan. Cysteine 1077 and cysteine 1097 are disulfide-bonded. A Glycyl lysine isopeptide (Lys-Gly) (interchain with G-Cter in SUMO1) cross-link involves residue lysine 1141. A disulfide bond links cysteine 1219 and cysteine 1233. Asparagine 1348 carries N-linked (GlcNAc...) asparagine glycosylation. The cysteines at positions 1367 and 1382 are disulfide-linked. Residues 1414-1434 (LVVVLTAAVLLLLALLTGALI) form a helical membrane-spanning segment. Over 1435–1480 (LYRRRQSAERGSFEGARYSRSSRSGPAEATEKNILVSDMEMNEQQE) the chain is Cytoplasmic. Residues 1446–1480 (SFEGARYSRSSRSGPAEATEKNILVSDMEMNEQQE) are disordered.

In terms of assembly, interacts directly with PLAUR/UPAR and PLAU/pro-UPA to form a tri-molecular complex. Interacts with collagen V. Interacts with C-terminal region of type I collagen/COL1A1. In terms of processing, N-glycosylated. Post-translationally, phosphorylated.

Its subcellular location is the cell membrane. Its function is as follows. May play a role as endocytotic lectin receptor displaying calcium-dependent lectin activity. Internalizes glycosylated ligands from the extracellular space for release in an endosomal compartment via clathrin-mediated endocytosis. May be involved in plasminogen activation system controlling the extracellular level of PLAUR/PLAU, and thus may regulate protease activity at the cell surface. May contribute to cellular uptake, remodeling and degradation of extracellular collagen matrices. May participate in remodeling of extracellular matrix cooperating with the matrix metalloproteinases (MMPs) secreted by hepatic stellate cells. May mediate endocytosis of partially degraded collagens and glycoproteins produced in the extracellular matrix by MMPs. In Rattus norvegicus (Rat), this protein is C-type mannose receptor 2 (Mrc2).